The primary structure comprises 419 residues: Hyaluronan synthase (419 aa).

5 helical membrane passes run L8–F28, V33–L53, I318–G338, A345–L365, and P376–L396.

Belongs to the NodC/HAS family. Mg(2+) is required as a cofactor.

It localises to the cell membrane. It catalyses the reaction [hyaluronan](n) + UDP-N-acetyl-alpha-D-glucosamine = N-acetyl-beta-D-glucosaminyl-(1-&gt;4)-[hyaluronan](n) + UDP + H(+). The catalysed reaction is N-acetyl-beta-D-glucosaminyl-(1-&gt;4)-[hyaluronan](n) + UDP-alpha-D-glucuronate = [hyaluronan](n+1) + UDP + H(+). Its pathway is glycan biosynthesis; hyaluronan biosynthesis. Its function is as follows. Glycosaminoglycan synthesis. The hyaluronic acid capsule is involved in the pathogenicity of group A Streptococci; it may be the major virulence determinant. The polypeptide is Hyaluronan synthase (hasA) (Streptococcus pyogenes serotype M6 (strain ATCC BAA-946 / MGAS10394)).